Here is a 315-residue protein sequence, read N- to C-terminus: Porphobilinogen deaminase (315 aa).

S-(dipyrrolylmethanemethyl)cysteine is present on C238.

Belongs to the HMBS family. As to quaternary structure, monomer. Dipyrromethane is required as a cofactor.

The enzyme catalyses 4 porphobilinogen + H2O = hydroxymethylbilane + 4 NH4(+). It functions in the pathway porphyrin-containing compound metabolism; protoporphyrin-IX biosynthesis; coproporphyrinogen-III from 5-aminolevulinate: step 2/4. Its function is as follows. Tetrapolymerization of the monopyrrole PBG into the hydroxymethylbilane pre-uroporphyrinogen in several discrete steps. The protein is Porphobilinogen deaminase of Albidiferax ferrireducens (strain ATCC BAA-621 / DSM 15236 / T118) (Rhodoferax ferrireducens).